A 104-amino-acid chain; its full sequence is UPF0145 protein TM1040_1243 (104 aa).

Belongs to the UPF0145 family.

The sequence is that of UPF0145 protein TM1040_1243 from Ruegeria sp. (strain TM1040) (Silicibacter sp.).